The chain runs to 646 residues: DNA mismatch repair protein MutL (646 aa).

Disordered regions lie at residues 356-380 and 415-452; these read FENR…NENS and TKNS…AKPH. A compositionally biased stretch (low complexity) spans 424–436; that stretch reads SEATSNEAASAEI.

It belongs to the DNA mismatch repair MutL/HexB family.

In terms of biological role, this protein is involved in the repair of mismatches in DNA. It is required for dam-dependent methyl-directed DNA mismatch repair. May act as a 'molecular matchmaker', a protein that promotes the formation of a stable complex between two or more DNA-binding proteins in an ATP-dependent manner without itself being part of a final effector complex. The chain is DNA mismatch repair protein MutL from Staphylococcus carnosus (strain TM300).